A 1178-amino-acid chain; its full sequence is Mannosyltransferase regulator 4 (1178 aa).

The Cytoplasmic portion of the chain corresponds to 1–27; the sequence is MLQRISSKLHRRFLSGLLRVKHYPLRR. The chain crosses the membrane as a helical; Signal-anchor for type II membrane protein span at residues 28 to 48; it reads ILLPLILLQIIIITFIWSNSP. Topologically, residues 49–1178 are lumenal; it reads QRNGLGRDAD…KKKQEEGHSN (1130 aa). Positions 519-521 match the DXD motif; that stretch reads DFD. Residues 1041 to 1178 are disordered; sequence EKKKKEEEEK…KKKQEEGHSN (138 aa). Tandem repeats lie at residues 1042–1049, 1050–1057, 1058–1065, 1066–1073, 1074–1081, and 1082–1089. Residues 1042-1174 are 17 X 8 AA tandem repeats of K-K-K-K-E-E-E-E; sequence KKKKEEEEKK…EEEEKKKQEE (133 aa). The stretch at 1090-1097 is one 7; approximate repeat; that stretch reads KKKQEEEE. Repeat unit 8 spans residues 1098–1105; sequence KKKKEEEE. The 9; approximate repeat unit spans residues 1106–1113; the sequence is KKKQEEGE. One copy of the 10; approximate repeat lies at 1114–1121; it reads KMKNEDEE. One copy of the 11; approximate repeat lies at 1122–1129; the sequence is NKKNEDEE. Repeat 12 spans residues 1130-1137; the sequence is KKKNEEEE. A 13; approximate repeat occupies 1138-1144; sequence KKKQEEK. One copy of the 14; approximate repeat lies at 1145–1152; sequence NKKNEDEE. Residues 1153 to 1160 form a 15; approximate repeat; it reads KKKQEEEE. One copy of the 16; approximate repeat lies at 1161 to 1168; that stretch reads KKKNEEEE. One copy of the 17; truncated repeat lies at 1169-1174; it reads KKKQEE.

This sequence belongs to the MNN4 family.

Its subcellular location is the golgi apparatus membrane. Its function is as follows. Golgi apparatus protein involved in N-glycan mannosylphosphorylation. While MNN4 seems to have a regulatory role in N-glycan mannosylphosphorylation, a transferase activity of MNN4 can not be ruled out. Mediates mannosylphosphate transfer in both the core and outer chain portions of N-linked oligosaccharides. Has partially redundant function with MNN14. The chain is Mannosyltransferase regulator 4 from Saccharomyces cerevisiae (strain ATCC 204508 / S288c) (Baker's yeast).